Consider the following 157-residue polypeptide: MQKIGIYPGTFDPVTNGHIDIIHRSSELFEKLIVAVAHSSAKNPMFSLDERLKMIQLATKSFKNVECVAFEGLLANLAKEYHCKVLVRGLRVVSDFEYELQMGYANKSLNHELETLYFMPTLQNAFISSSIVRSIIAHKGDASHLVPKEIYPLISKA.

Position 10 (Thr10) interacts with substrate. ATP is bound by residues 10-11 and His18; that span reads TF. Residues Lys42, Leu74, and Arg88 each contribute to the substrate site. Residues 89-91, Glu99, and 124-130 each bind ATP; these read GLR and NAFISSS.

The protein belongs to the bacterial CoaD family. As to quaternary structure, homohexamer. Requires Mg(2+) as cofactor.

It is found in the cytoplasm. The enzyme catalyses (R)-4'-phosphopantetheine + ATP + H(+) = 3'-dephospho-CoA + diphosphate. The protein operates within cofactor biosynthesis; coenzyme A biosynthesis; CoA from (R)-pantothenate: step 4/5. Its activity is regulated as follows. Tightly binds to CoA, which is presumably a feedback inhibitor. Potently inhibited by D-amethopterin, which simultaneously occupies the 4'-phosphopantetheine- and ATP-binding sites; following treatment with D-amethopterin, H.pylori exhibits morphological characteristics associated with cell death, showing that D-amethopterin displays antimicrobial activity. In terms of biological role, reversibly transfers an adenylyl group from ATP to 4'-phosphopantetheine, yielding dephospho-CoA (dPCoA) and pyrophosphate. This chain is Phosphopantetheine adenylyltransferase, found in Helicobacter pylori (strain ATCC 700392 / 26695) (Campylobacter pylori).